The following is a 520-amino-acid chain: GMP synthase [glutamine-hydrolyzing] (520 aa).

The Glutamine amidotransferase type-1 domain occupies Lys9–Gln202. Cys86 acts as the Nucleophile in catalysis. Residues His176 and Glu178 contribute to the active site. The 193-residue stretch at Trp203–Arg395 folds into the GMPS ATP-PPase domain. Ser230–Ser236 is a binding site for ATP.

As to quaternary structure, homodimer.

It carries out the reaction XMP + L-glutamine + ATP + H2O = GMP + L-glutamate + AMP + diphosphate + 2 H(+). It participates in purine metabolism; GMP biosynthesis; GMP from XMP (L-Gln route): step 1/1. Catalyzes the synthesis of GMP from XMP. This chain is GMP synthase [glutamine-hydrolyzing], found in Syntrophotalea carbinolica (strain DSM 2380 / NBRC 103641 / GraBd1) (Pelobacter carbinolicus).